The sequence spans 514 residues: 2-isopropylmalate synthase (514 aa).

One can recognise a Pyruvate carboxyltransferase domain in the interval 4–266 (INVFDTSLRD…KTGLKLSELK (263 aa)). Residues aspartate 13, histidine 201, histidine 203, and asparagine 237 each contribute to the Mn(2+) site. Positions 390–514 (ELTALQVTYG…AKREMAKVES (125 aa)) are regulatory domain.

This sequence belongs to the alpha-IPM synthase/homocitrate synthase family. LeuA type 1 subfamily. As to quaternary structure, homodimer. Mn(2+) serves as cofactor.

The protein localises to the cytoplasm. It catalyses the reaction 3-methyl-2-oxobutanoate + acetyl-CoA + H2O = (2S)-2-isopropylmalate + CoA + H(+). It participates in amino-acid biosynthesis; L-leucine biosynthesis; L-leucine from 3-methyl-2-oxobutanoate: step 1/4. Its function is as follows. Catalyzes the condensation of the acetyl group of acetyl-CoA with 3-methyl-2-oxobutanoate (2-ketoisovalerate) to form 3-carboxy-3-hydroxy-4-methylpentanoate (2-isopropylmalate). In Shouchella clausii (strain KSM-K16) (Alkalihalobacillus clausii), this protein is 2-isopropylmalate synthase.